We begin with the raw amino-acid sequence, 503 residues long: ATP synthase subunit alpha (503 aa).

Position 170–177 (170–177 (GDKQTGKT)) interacts with ATP.

This sequence belongs to the ATPase alpha/beta chains family. F-type ATPases have 2 components, CF(1) - the catalytic core - and CF(0) - the membrane proton channel. CF(1) has five subunits: alpha(3), beta(3), gamma(1), delta(1), epsilon(1). CF(0) has three main subunits: a(1), b(2) and c(9-12). The alpha and beta chains form an alternating ring which encloses part of the gamma chain. CF(1) is attached to CF(0) by a central stalk formed by the gamma and epsilon chains, while a peripheral stalk is formed by the delta and b chains.

The protein resides in the cell inner membrane. It carries out the reaction ATP + H2O + 4 H(+)(in) = ADP + phosphate + 5 H(+)(out). Its function is as follows. Produces ATP from ADP in the presence of a proton gradient across the membrane. The alpha chain is a regulatory subunit. The chain is ATP synthase subunit alpha from Helicobacter pylori (strain Shi470).